A 1032-amino-acid chain; its full sequence is uncharacterized protein (1032 aa).

The Cytoplasmic portion of the chain corresponds to 1–17; the sequence is MYEEIRMKFTDIFIRRP. Residues 18 to 36 traverse the membrane as a helical segment; that stretch reads VLAVSISLLMIILGLQAIS. Residues 37-337 lie on the Periplasmic side of the membrane; that stretch reads KLAVREYPKM…TIAINSSIHE (301 aa). A helical membrane pass occupies residues 338-357; the sequence is VIKTIGEATLIVLVVILMFI. The Cytoplasmic portion of the chain corresponds to 358-363; the sequence is GSFRAI. Residues 364–383 traverse the membrane as a helical segment; it reads LIPILAIPISLIGVLMLLQS. Over 384-389 the chain is Periplasmic; that stretch reads FNFSIN. The helical transmembrane segment at 390–411 threads the bilayer; the sequence is LMTLLALILAIGLVVDDAIVVL. The Cytoplasmic portion of the chain corresponds to 412–438; it reads ENIDRHIKAGETPFRAAIIGTREIAVP. Residues 439–457 traverse the membrane as a helical segment; that stretch reads VISMTIALIAVYSPMALMG. Residues 458 to 470 lie on the Periplasmic side of the membrane; that stretch reads GITGTLFKEFALT. The helical transmembrane segment at 471 to 493 threads the bilayer; that stretch reads LAGAVFISGVVALTLSPMMSSKL. Residues 494–529 lie on the Cytoplasmic side of the membrane; it reads LKSNAKPTWMEERVEHTLGKVNRVYEYMLDLVMLNR. Residues 530 to 548 form a helical membrane-spanning segment; it reads KSMLAFAVVIFSTLPFLFN. The Periplasmic portion of the chain corresponds to 549–852; it reads SLSSELTPNE…ARQLVQEGNA (304 aa). The helical transmembrane segment at 853-872 threads the bilayer; the sequence is LAVTFALAVIIIFLVLAIQF. Residues 873 to 878 are Cytoplasmic-facing; that stretch reads ESIRDP. The chain crosses the membrane as a helical span at residues 879 to 898; it reads MVIMISVPLAVSGALVSLNI. At 899–910 the chain is on the periplasmic side; that stretch reads LSFFSIAGTTLN. The helical transmembrane segment at 911 to 932 threads the bilayer; it reads IYSQVGLITLVGLITKHGILMC. Over 933–960 the chain is Cytoplasmic; it reads EVAKEEQLNHGKTRIEAITHAAKVRLRP. A helical membrane pass occupies residues 961–979; the sequence is ILMTTAAMVAGLIPLLYAT. At 980–992 the chain is on the periplasmic side; the sequence is GAGAVSRFSIGIV. A helical membrane pass occupies residues 993–1015; that stretch reads IVAGLSIGTIFTLFVLPVVYSYV. At 1016–1032 the chain is on the cytoplasmic side; that stretch reads ATEHKPLPVFDENKTTH.

Belongs to the resistance-nodulation-cell division (RND) (TC 2.A.6) family.

The protein localises to the cell inner membrane. Functionally, could be a drug efflux pump. This is an uncharacterized protein from Haemophilus influenzae (strain ATCC 51907 / DSM 11121 / KW20 / Rd).